We begin with the raw amino-acid sequence, 348 residues long: UDP-glucose 4-epimerase (348 aa).

Position 125 (threonine 125) interacts with substrate. Residue tyrosine 149 is the Proton acceptor of the active site.

It belongs to the NAD(P)-dependent epimerase/dehydratase family. It depends on NAD(+) as a cofactor.

The enzyme catalyses UDP-alpha-D-glucose = UDP-alpha-D-galactose. The protein operates within carbohydrate metabolism; galactose metabolism. Its pathway is glycan metabolism; exopolysaccharide biosynthesis. The polypeptide is UDP-glucose 4-epimerase (exoB) (Azospirillum brasilense).